A 455-amino-acid polypeptide reads, in one-letter code: Retinoic acid receptor beta (455 aa).

A modulating region spans residues 1-87 (MTTSSRTCPV…PLPPPRVYKP (87 aa)). The interval 44–78 (LQSHPPTSGCSTPSPATVETQSTSSEELVPSPPSP) is disordered. Polar residues predominate over residues 47–66 (HPPTSGCSTPSPATVETQST). 2 consecutive NR C4-type zinc fingers follow at residues 88–108 (CFVC…CEGC) and 124–148 (CHRD…LQKC). Positions 88–153 (CFVCQDKSSG…RLQKCFEVGM (66 aa)) form a DNA-binding region, nuclear receptor. A hinge region spans residues 154–182 (SKESVRNDRNKKKKEPTKQESTENYEMTA). Positions 183–417 (ELDDLTEKIR…PLIQEMLENS (235 aa)) constitute an NR LBD domain. The tract at residues 416-455 (NSEGHEPLTPTSNGNTAEHSPSISPSSVDNSSVSQSPMVQ) is disordered. Over residues 424 to 434 (TPTSNGNTAEH) the composition is skewed to polar residues. Over residues 435 to 455 (SPSISPSSVDNSSVSQSPMVQ) the composition is skewed to low complexity.

It belongs to the nuclear hormone receptor family. NR1 subfamily. As to quaternary structure, heterodimer; with a RXR molecule. Binds DNA preferentially as a RAR/RXR heterodimer.

It is found in the nucleus. Receptor for retinoic acid. Retinoic acid receptors bind as heterodimers to their target response elements in response to their ligands, all-trans or 9-cis retinoic acid, and regulate gene expression in various biological processes. The RAR/RXR heterodimers bind to the retinoic acid response elements (RARE) composed of tandem 5'-AGGTCA-3' sites known as DR1-DR5. Required for limb and craniofacial development. This is Retinoic acid receptor beta (RARB) from Gallus gallus (Chicken).